Reading from the N-terminus, the 750-residue chain is Photosystem I P700 chlorophyll a apoprotein A1 (750 aa).

A run of 8 helical transmembrane segments spans residues 70-93, 156-179, 195-219, 291-309, 346-369, 385-411, 433-455, and 531-549; these read VFSA…FHGA, LYCT…FHYH, LNHH…HVSL, IAHH…GHMY, WHAQ…HHMY, LSLF…IFMV, AIIS…LYIH, and FLVH…LILL. The [4Fe-4S] cluster site is built by C573 and C582. Helical transmembrane passes span 589–610 and 664–686; these read HVFL…HFSW and LSAY…MFLF. H675 provides a ligand contact to chlorophyll a'. Residues M683 and Y691 each coordinate chlorophyll a. Residue W692 coordinates phylloquinone. The chain crosses the membrane as a helical span at residues 724–744; sequence AVGVTHYLLGGIATTWAFFLA.

Belongs to the PsaA/PsaB family. The PsaA/B heterodimer binds the P700 chlorophyll special pair and subsequent electron acceptors. PSI consists of a core antenna complex that captures photons, and an electron transfer chain that converts photonic excitation into a charge separation. The eukaryotic PSI reaction center is composed of at least 11 subunits. P700 is a chlorophyll a/chlorophyll a' dimer, A0 is one or more chlorophyll a, A1 is one or both phylloquinones and FX is a shared 4Fe-4S iron-sulfur center. is required as a cofactor.

It is found in the plastid. Its subcellular location is the chloroplast thylakoid membrane. It catalyses the reaction reduced [plastocyanin] + hnu + oxidized [2Fe-2S]-[ferredoxin] = oxidized [plastocyanin] + reduced [2Fe-2S]-[ferredoxin]. Its function is as follows. PsaA and PsaB bind P700, the primary electron donor of photosystem I (PSI), as well as the electron acceptors A0, A1 and FX. PSI is a plastocyanin-ferredoxin oxidoreductase, converting photonic excitation into a charge separation, which transfers an electron from the donor P700 chlorophyll pair to the spectroscopically characterized acceptors A0, A1, FX, FA and FB in turn. Oxidized P700 is reduced on the lumenal side of the thylakoid membrane by plastocyanin. The chain is Photosystem I P700 chlorophyll a apoprotein A1 from Amborella trichopoda.